The primary structure comprises 59 residues: Embryonic testis differentiation protein homolog C (59 aa).

The segment at 1–22 (MDKELPKASPSEPALNIKKSGK) is disordered.

The chain is Embryonic testis differentiation protein homolog C from Homo sapiens (Human).